We begin with the raw amino-acid sequence, 505 residues long: Flagellin (505 aa).

The protein belongs to the bacterial flagellin family.

Its subcellular location is the secreted. The protein resides in the bacterial flagellum. Flagellin is the subunit protein which polymerizes to form the filaments of bacterial flagella. The chain is Flagellin (fliC) from Salmonella derby.